Consider the following 74-residue polypeptide: Protein SlyX homolog (74 aa).

The protein belongs to the SlyX family.

This chain is Protein SlyX homolog, found in Aliivibrio fischeri (strain ATCC 700601 / ES114) (Vibrio fischeri).